Here is a 216-residue protein sequence, read N- to C-terminus: MAFLLRVVPRLQGPTAWRRPLQGLWCCSGQGDSKRWVGSRSPHSREKSPGTETETFHTIYRFRAIRAIGFLSRLKLAQTAVTVVALPPGFYCYSQGLMTLSSLCLLGGVASFALAMLCWMSHFFRRLVGILYVNESGTLLRVAHLTFWGWRQDTYCAVSDMIPLSESQERVQDVFVRIQQYSGKQTFYLTLRYGRILDRERFAQVFGTLATLKNSK.

Residues 1-68 (MAFLLRVVPR…IYRFRAIRAI (68 aa)) are Mitochondrial matrix-facing. The segment at 31 to 52 (GDSKRWVGSRSPHSREKSPGTE) is disordered. Residues 69-91 (GFLSRLKLAQTAVTVVALPPGFY) traverse the membrane as a helical segment. Residues 92–103 (CYSQGLMTLSSL) are Mitochondrial intermembrane-facing. The chain crosses the membrane as a helical span at residues 104 to 124 (CLLGGVASFALAMLCWMSHFF). Over 125 to 216 (RRLVGILYVN…GTLATLKNSK (92 aa)) the chain is Mitochondrial matrix.

This sequence belongs to the TMEM186 family. Part of the mitochondrial complex I assembly/MCIA complex that comprises at least the core subunits TMEM126B, NDUFAF1, ECSIT and ACAD9 and complement subunits such as COA1 and TMEM186. Interacts with MT-ND3.

The protein localises to the mitochondrion inner membrane. In terms of biological role, as part of the MCIA complex, required for efficient assembly of the mitochondrial complex I. The sequence is that of Transmembrane protein 186 from Mus musculus (Mouse).